Reading from the N-terminus, the 353-residue chain is Photosystem II D2 protein (353 aa).

Threonine 2 carries the N-acetylthreonine modification. At threonine 2 the chain carries Phosphothreonine. Residues cysteine 41–threonine 61 traverse the membrane as a helical segment. Histidine 118 lines the chlorophyll a pocket. Residues glycine 125–proline 141 form a helical membrane-spanning segment. Residues glutamine 130 and asparagine 143 each contribute to the pheophytin a site. Residues valine 153 to serine 166 form a helical membrane-spanning segment. Residue histidine 198 coordinates chlorophyll a. Residues alanine 208–aspartate 228 traverse the membrane as a helical segment. 2 residues coordinate a plastoquinone: histidine 215 and phenylalanine 262. Histidine 215 provides a ligand contact to Fe cation. Histidine 269 lines the Fe cation pocket. The chain crosses the membrane as a helical span at residues glycine 279–arginine 295.

Belongs to the reaction center PufL/M/PsbA/D family. In terms of assembly, PSII is composed of 1 copy each of membrane proteins PsbA, PsbB, PsbC, PsbD, PsbE, PsbF, PsbH, PsbI, PsbJ, PsbK, PsbL, PsbM, PsbT, PsbX, PsbY, PsbZ, Psb30/Ycf12, at least 3 peripheral proteins of the oxygen-evolving complex and a large number of cofactors. It forms dimeric complexes. It depends on The D1/D2 heterodimer binds P680, chlorophylls that are the primary electron donor of PSII, and subsequent electron acceptors. It shares a non-heme iron and each subunit binds pheophytin, quinone, additional chlorophylls, carotenoids and lipids. There is also a Cl(-1) ion associated with D1 and D2, which is required for oxygen evolution. The PSII complex binds additional chlorophylls, carotenoids and specific lipids. as a cofactor.

It is found in the plastid. Its subcellular location is the chloroplast thylakoid membrane. It carries out the reaction 2 a plastoquinone + 4 hnu + 2 H2O = 2 a plastoquinol + O2. In terms of biological role, photosystem II (PSII) is a light-driven water:plastoquinone oxidoreductase that uses light energy to abstract electrons from H(2)O, generating O(2) and a proton gradient subsequently used for ATP formation. It consists of a core antenna complex that captures photons, and an electron transfer chain that converts photonic excitation into a charge separation. The D1/D2 (PsbA/PsbD) reaction center heterodimer binds P680, the primary electron donor of PSII as well as several subsequent electron acceptors. D2 is needed for assembly of a stable PSII complex. The protein is Photosystem II D2 protein of Coffea arabica (Arabian coffee).